We begin with the raw amino-acid sequence, 538 residues long: Neutral protease B (538 aa).

Positions 1-28 are cleaved as a signal peptide; the sequence is MRNLTKTSLLLAGLCTAAQMVFVTHASA. Positions 29 to 223 are cleaved as a propeptide — activation peptide; sequence EESIEYDHTY…VIESFNAIHE (195 aa). Residue D365 participates in Ca(2+) binding. H369 is a Zn(2+) binding site. The active site involves E370. Zn(2+) is bound by residues H373 and E393. 9 residues coordinate Ca(2+): D404, D406, D407, E409, E412, Y415, T416, I419, and D422. A disordered region spans residues 421 to 441; it reads GDSLRSLEDPSKQGNPDHYSN. H453 functions as the Proton donor in the catalytic mechanism.

Belongs to the peptidase M4 family. Requires Zn(2+) as cofactor.

The protein resides in the secreted. Its activity is regulated as follows. Protease activity can be inhibited in vitro by either a zinc specific chelator, 1,10-phenanthroline, or a metal chelator, EDTA. The enzyme is resistant to phenylmethylsulfonyl fluoride and iodoacetic acid. Its function is as follows. Protease able to cleave casein in vitro. This is Neutral protease B from Bacillus subtilis (strain 168).